We begin with the raw amino-acid sequence, 348 residues long: Tocopherol O-methyltransferase, chloroplastic (348 aa).

Residues 1–51 (MKATLAAPSSLTSLPYRTNSSFGSKSSLLFRSPSSSSSVSMTTTRGNVAVA) constitute a chloroplast transit peptide. An N-acetylalanine modification is found at Ala52. The interval 130–139 (VVDVGCGIGG) is SAM motif I. Residues 193–201 (GKFDLVWSM) form an SAM motif II region. The tract at residues 220–229 (VAAPGGRIII) is SAM motif III.

The protein belongs to the class I-like SAM-binding methyltransferase superfamily. gTMT family.

The protein localises to the plastid. It localises to the chloroplast. It carries out the reaction gamma-tocopherol + S-adenosyl-L-methionine = (+)-alpha-tocopherol + S-adenosyl-L-homocysteine + H(+). The catalysed reaction is delta-tocotrienol + S-adenosyl-L-methionine = beta-tocotrienol + S-adenosyl-L-homocysteine + H(+). It catalyses the reaction gamma-tocotrienol + S-adenosyl-L-methionine = alpha-tocotrienol + S-adenosyl-L-homocysteine + H(+). The enzyme catalyses delta-tocopherol + S-adenosyl-L-methionine = beta-tocopherol + S-adenosyl-L-homocysteine + H(+). The protein operates within cofactor biosynthesis; tocopherol biosynthesis. Its function is as follows. Involved in the synthesis of tocopherol (vitamin E). Methylates gamma- and delta-tocopherol to form beta- and alpha-tocopherol, respectively. This chain is Tocopherol O-methyltransferase, chloroplastic (VTE4), found in Arabidopsis thaliana (Mouse-ear cress).